The chain runs to 1902 residues: Rho GTPase-activating protein 21-B (1902 aa).

Disordered regions lie at residues 1–44 (MATR…EGFC), 78–97 (TSVK…RPRN), 284–317 (RTNR…NVPM), 348–369 (PAAH…GSHQ), 409–450 (NTTD…SQER), 581–603 (TRNF…RSGF), 613–632 (IPTP…DDGI), and 879–902 (KARE…DVFS). Residues 10–22 (EQQQEPSSPASEI) are compositionally biased toward polar residues. One can recognise a PDZ domain in the interval 77–162 (HTSVKDEENG…TLELSVMPKD (86 aa)). The span at 305–317 (TTSPSSSTPNVPM) shows a compositional bias: low complexity. Polar residues predominate over residues 409 to 424 (NTTDYNQMLPNRSSGQ). Positions 903–1016 (DSNKEGFLYF…WIKAIQENGN (114 aa)) constitute a PH domain. Polar residues predominate over residues 1039–1063 (TMMSSSSNKTEPSPKAQRQTLSIRQ). A disordered region spans residues 1039–1095 (TMMSSSSNKTEPSPKAQRQTLSIRQQFRAGKPDDDISPPKDKGSWRRIMKKPFEKKP). Positions 1068 to 1082 (GKPDDDISPPKDKGS) are enriched in basic and acidic residues. The Rho-GAP domain maps to 1103–1295 (VRLDDCPPAH…TLIQKHDWFF (193 aa)). 6 disordered regions span residues 1306-1357 (TVHE…GSGK), 1375-1394 (RKRK…DELD), 1494-1520 (MSDS…VSPE), 1559-1704 (VQSV…EPAW), 1729-1748 (QKAN…RHTL), and 1803-1890 (TSTS…KLSG). The segment covering 1339 to 1357 (SDSATSDSAKSKGSWGSGK) has biased composition (low complexity). Polar residues predominate over residues 1494 to 1511 (MSDSGTMLSTSSQASVQG). Composition is skewed to basic and acidic residues over residues 1575 to 1585 (SELVSEGRPME) and 1601 to 1613 (FDRR…EEPS). Residues 1614-1630 (RNVQVNSEGSPSCTEGS) show a composition bias toward polar residues. 2 stretches are compositionally biased toward basic and acidic residues: residues 1634–1652 (KMDR…DTLS) and 1661–1673 (TDSD…KTEE). Residues 1737 to 1748 (RKKKNIRRRHTL) show a composition bias toward basic residues. The segment covering 1865 to 1878 (NGDSFQSKNKNNFS) has biased composition (polar residues).

The protein resides in the golgi apparatus membrane. It is found in the cell junction. It localises to the cytoplasmic vesicle membrane. Its subcellular location is the cytoplasm. The protein localises to the cytoskeleton. Functionally, GTPase-activating protein (GAP) for rhoa and cdc42. In Xenopus laevis (African clawed frog), this protein is Rho GTPase-activating protein 21-B (arhgap21-b).